The primary structure comprises 632 residues: Mitoguardin 1 (632 aa).

A helical membrane pass occupies residues 70 to 90; the sequence is PVAKKLFVVTAVSAISVIFLA. A phosphoserine mark is found at S289 and S293.

Belongs to the mitoguardin family. Homodimer and heterodimer; forms heterodimers with MIGA2. Interacts with PLD6/MitoPLD.

The protein resides in the mitochondrion outer membrane. Functionally, regulator of mitochondrial fusion: acts by forming homo- and heterodimers at the mitochondrial outer membrane and facilitating the formation of PLD6/MitoPLD dimers. May act by regulating phospholipid metabolism via PLD6/MitoPLD. This is Mitoguardin 1 from Homo sapiens (Human).